A 258-amino-acid chain; its full sequence is Large ribosomal subunit protein uL15c (258 aa).

The N-terminal 65 residues, 1–65, are a transit peptide targeting the chloroplast; the sequence is MSAASLIPVS…NVKSSGENVR (65 aa). The interval 67–90 is disordered; the sequence is RLDNLGPQPGSRKRPKRKGRGIAA. Basic residues predominate over residues 77 to 86; that stretch reads SRKRPKRKGR.

This sequence belongs to the universal ribosomal protein uL15 family. As to quaternary structure, part of the 50S ribosomal subunit.

It is found in the plastid. It localises to the chloroplast. The sequence is that of Large ribosomal subunit protein uL15c (RPL15) from Pisum sativum (Garden pea).